The primary structure comprises 283 residues: MFAFASFAISAIFFLCSFSYVSSIKLCGIPGAPACKRREISLYKRATDTFPDLSSAIASTSYYNISEGTYCHVSGSNLCVSPDVIAICANHSTVLLNCPTVLGYPKGRGSACVETNSSYGLTRGLCQIGSSNYSTSANSSNFDNANVINVTTSVSSGSTSTHSKRSSGISLSYTNIVDQPILFTRDSSMDWSCNMTLCNTDYPYLVNTCFNGTQYPVNCNSALRTPFGGATCRNIGYKGQGICVYTNDSRIPVADDHVIVNTTSKINPNITSVFNYRDNAFLW.

The signal sequence occupies residues 1 to 23; sequence MFAFASFAISAIFFLCSFSYVSS.

It is found in the secreted. This is an uncharacterized protein from Schizosaccharomyces pombe (strain 972 / ATCC 24843) (Fission yeast).